The chain runs to 84 residues: Small ribosomal subunit protein uS17 (84 aa).

The protein belongs to the universal ribosomal protein uS17 family. In terms of assembly, part of the 30S ribosomal subunit.

One of the primary rRNA binding proteins, it binds specifically to the 5'-end of 16S ribosomal RNA. The chain is Small ribosomal subunit protein uS17 from Borrelia recurrentis (strain A1).